The primary structure comprises 555 residues: MARVEL domain-containing protein 2 (555 aa).

The span at 1–20 (MSSSDARSRIRDRGYSEVPR) shows a compositional bias: basic and acidic residues. A disordered region spans residues 1–71 (MSSSDARSRI…FYSSDTEEPA (71 aa)). Residues 1-191 (MSSSDARSRI…YMKSWAGLLR (191 aa)) are Cytoplasmic-facing. Positions 46 to 59 (PLPPPPLPLQPPFG) are enriched in pro residues. 3 positions are modified to phosphoserine: serine 117, serine 121, and serine 158. Positions 118–142 (PPASPARANHHPYKDPSRGSQGTFN) are disordered. Position 163 is a phosphothreonine (threonine 163). The region spanning 185-364 (SWAGLLRILG…SALVCLKLWR (180 aa)) is the MARVEL domain. Residues 192–212 (ILGVVELLLGAGVFACVTAYI) traverse the membrane as a helical segment. The Extracellular portion of the chain corresponds to 213–251 (HKDNEWYNLFGYTQPYGMGGLGSLGNTYGGYYYSGPKTP). A helical transmembrane segment spans residues 252–272 (FVLVVAGLAWITTIIILVLGM). Residues 273-288 (SMYYRTILLDSNWWPL) are Cytoplasmic-facing. The chain crosses the membrane as a helical span at residues 289 to 309 (TEFGVNVALFILYMAAAIVYV). Over 310–338 (NDTNRGGLCYYPLFNTPMNAMFCRVEGGQ) the chain is Extracellular. A helical membrane pass occupies residues 339–359 (IAAMIFLFVTMIVYLVSALVC). Over 360-555 (LKLWRHEAAR…VMNWDTQGYP (196 aa)) the chain is Cytoplasmic. Position 384 is a phosphoserine (serine 384). Residue lysine 408 forms a Glycyl lysine isopeptide (Lys-Gly) (interchain with G-Cter in ubiquitin) linkage. In terms of domain architecture, OCEL spans 437–548 (PDYVAKYPVI…RIQEYDKVMN (112 aa)). Residues 521–545 (EKKERCDYLKNKLSHIKQRIQEYDK) are a coiled coil.

It belongs to the ELL/occludin family. Interacts with TJP1. Interacts with the ubiquitin ligase ITCH. Interacts (via C-terminal cytoplasmic domain) with LSR (via the cytoplasmic domain), ILDR1 and ILDR2; the interaction is required to recruit MARVELD2 to tricellular contacts. Post-translationally, ubiquitinated by ITCH; but this ubiquitination does not lead to proteasomal degradation. Polyubiquitinated at Lys-408 via 'Lys-63'-linked ubiquitin chains; deubiquitinated by USP53. In terms of processing, phosphorylated. In terms of tissue distribution, detected in small intestine, stomach and kidney, in epithelial cells. Detected in pancreas, retina and lung, and in stria vascularis, utricle and the organ of Conti in the inner ear (at protein level). Predominantly detected in small intestine, lung and kidney, with lower levels in liver, testis and brain. In colon, expressed in the entire crypts.

Its subcellular location is the cell membrane. It localises to the cell junction. The protein localises to the tight junction. Functionally, plays a role in the formation of tricellular tight junctions and of epithelial barriers. Required for normal hearing via its role in the separation of the endolymphatic and perilymphatic spaces of the organ of Corti in the inner ear, and for normal survival of hair cells in the organ of Corti. The chain is MARVEL domain-containing protein 2 from Mus musculus (Mouse).